We begin with the raw amino-acid sequence, 454 residues long: NADP-specific glutamate dehydrogenase 1 (454 aa).

The residue at position 2 (Ser-2) is an N-acetylserine. Residue Lys-110 is part of the active site. Position 174-203 (Gly-174–Ala-203) interacts with NAD(+). Residues Lys-325, Lys-371, and Lys-433 each participate in a glycyl lysine isopeptide (Lys-Gly) (interchain with G-Cter in ubiquitin) cross-link.

The protein belongs to the Glu/Leu/Phe/Val dehydrogenases family. Homohexamer.

The enzyme catalyses L-glutamate + NADP(+) + H2O = 2-oxoglutarate + NH4(+) + NADPH + H(+). Functionally, catalyzes the incorporation of an ammonium ion into alpha-ketoglutarate to form L-glutamate, the major route of assimilation of ammonia into an organic form in yeast. The protein is NADP-specific glutamate dehydrogenase 1 of Saccharomyces cerevisiae (strain ATCC 204508 / S288c) (Baker's yeast).